Here is a 246-residue protein sequence, read N- to C-terminus: Small ribosomal subunit protein uS2c (246 aa).

This sequence belongs to the universal ribosomal protein uS2 family.

The protein localises to the plastid. Its subcellular location is the chloroplast. This Pelargonium hortorum (Common geranium) protein is Small ribosomal subunit protein uS2c (rps2).